The sequence spans 131 residues: Aspartate 1-decarboxylase (131 aa).

Ser-25 serves as the catalytic Schiff-base intermediate with substrate; via pyruvic acid. Ser-25 carries the pyruvic acid (Ser) modification. Thr-57 provides a ligand contact to substrate. The Proton donor role is filled by Tyr-58. Residue 73–75 (GAA) participates in substrate binding.

It belongs to the PanD family. As to quaternary structure, heterooctamer of four alpha and four beta subunits. Requires pyruvate as cofactor. Is synthesized initially as an inactive proenzyme, which is activated by self-cleavage at a specific serine bond to produce a beta-subunit with a hydroxyl group at its C-terminus and an alpha-subunit with a pyruvoyl group at its N-terminus.

The protein localises to the cytoplasm. It carries out the reaction L-aspartate + H(+) = beta-alanine + CO2. It functions in the pathway cofactor biosynthesis; (R)-pantothenate biosynthesis; beta-alanine from L-aspartate: step 1/1. Its function is as follows. Catalyzes the pyruvoyl-dependent decarboxylation of aspartate to produce beta-alanine. This is Aspartate 1-decarboxylase from Chlorobium phaeobacteroides (strain DSM 266 / SMG 266 / 2430).